Reading from the N-terminus, the 697-residue chain is Probable translocation protein y4yR (697 aa).

The next 8 membrane-spanning stretches (helical) occupy residues Val-20 to Val-40, Ala-42 to Ser-62, Phe-67 to Ala-87, Ser-107 to Val-127, Ser-200 to Leu-220, Leu-235 to Ala-255, Val-293 to Phe-313, and Ile-372 to Val-392. Residues Ile-675 to Gly-697 are disordered. The span at Ser-680–Gly-697 shows a compositional bias: polar residues.

The protein belongs to the FHIPEP (flagella/HR/invasion proteins export pore) family.

It localises to the cell inner membrane. In terms of biological role, could be involved in the secretion of an unknown factor. The polypeptide is Probable translocation protein y4yR (Sinorhizobium fredii (strain NBRC 101917 / NGR234)).